Consider the following 119-residue polypeptide: MEFGLSWVFLVAILKGVQCEVQLVESGGGLVQPGRSLRLSCTASGFTFGDYAMSWVRQAPGKGLEWVGFIRSKAYGGTTEYAASVKGRFTISRDDSKSIAYLQMNSLKTEDTAVYYCTR.

The N-terminal stretch at 1-19 (MEFGLSWVFLVAILKGVQC) is a signal peptide. Positions 20-44 (EVQLVESGGGLVQPGRSLRLSCTAS) are framework-1. An Ig-like domain is found at 20–119 (EVQLVESGGG…EDTAVYYCTR (100 aa)). Cysteine 41 and cysteine 117 form a disulfide bridge. Residues 45–52 (GFTFGDYA) form a complementarity-determining-1 region. Residues 53 to 69 (MSWVRQAPGKGLEWVGF) are framework-2. The segment at 70 to 79 (IRSKAYGGTT) is complementarity-determining-2. The segment at 80-117 (EYAASVKGRFTISRDDSKSIAYLQMNSLKTEDTAVYYC) is framework-3. Residues 118-119 (TR) are complementarity-determining-3.

Immunoglobulins are composed of two identical heavy chains and two identical light chains; disulfide-linked.

It is found in the secreted. It localises to the cell membrane. Its function is as follows. V region of the variable domain of immunoglobulin heavy chains that participates in the antigen recognition. Immunoglobulins, also known as antibodies, are membrane-bound or secreted glycoproteins produced by B lymphocytes. In the recognition phase of humoral immunity, the membrane-bound immunoglobulins serve as receptors which, upon binding of a specific antigen, trigger the clonal expansion and differentiation of B lymphocytes into immunoglobulins-secreting plasma cells. Secreted immunoglobulins mediate the effector phase of humoral immunity, which results in the elimination of bound antigens. The antigen binding site is formed by the variable domain of one heavy chain, together with that of its associated light chain. Thus, each immunoglobulin has two antigen binding sites with remarkable affinity for a particular antigen. The variable domains are assembled by a process called V-(D)-J rearrangement and can then be subjected to somatic hypermutations which, after exposure to antigen and selection, allow affinity maturation for a particular antigen. This is Immunoglobulin heavy variable 3-49 from Homo sapiens (Human).